The chain runs to 392 residues: Succinate--CoA ligase [ADP-forming] subunit beta (392 aa).

An ATP-grasp domain is found at 9-236 (RDLFERHGLP…QAAVDPLEQA (228 aa)). Residues Lys45, 52-54 (GRG), Ala94, and Glu99 contribute to the ATP site. Positions 191 and 205 each coordinate Mg(2+). Substrate contacts are provided by residues Asn256 and 318–320 (GIT).

It belongs to the succinate/malate CoA ligase beta subunit family. In terms of assembly, heterotetramer of two alpha and two beta subunits. The cofactor is Mg(2+).

It carries out the reaction succinate + ATP + CoA = succinyl-CoA + ADP + phosphate. The enzyme catalyses GTP + succinate + CoA = succinyl-CoA + GDP + phosphate. Its pathway is carbohydrate metabolism; tricarboxylic acid cycle; succinate from succinyl-CoA (ligase route): step 1/1. In terms of biological role, succinyl-CoA synthetase functions in the citric acid cycle (TCA), coupling the hydrolysis of succinyl-CoA to the synthesis of either ATP or GTP and thus represents the only step of substrate-level phosphorylation in the TCA. The beta subunit provides nucleotide specificity of the enzyme and binds the substrate succinate, while the binding sites for coenzyme A and phosphate are found in the alpha subunit. This is Succinate--CoA ligase [ADP-forming] subunit beta from Salinispora arenicola (strain CNS-205).